A 428-amino-acid polypeptide reads, in one-letter code: Hemagglutinin-esterase (428 aa).

The N-terminal stretch at 1–19 is a signal peptide; it reads MCIAMAPRTLLLLIXCQLV. An esterase domain 1 region spans residues 9–129; it reads TLLLLIXCQL…DNKRWMGNKA (121 aa). Residues 20-404 lie on the Virion surface side of the membrane; it reads FGFNEPLNIV…PVCIYDPLPV (385 aa). Residue serine 42 is the Nucleophile of the active site. A disulfide bridge connects residues cysteine 46 and cysteine 67. N-linked (GlcNAc...) asparagine; by host glycans are attached at residues asparagine 91, asparagine 149, asparagine 193, asparagine 243, and asparagine 313. Residues cysteine 115 and cysteine 164 are joined by a disulfide bond. The receptor binding stretch occupies residues 130 to 278; it reads RFYARVYEKM…GNYKAVSLEY (149 aa). 2 disulfides stabilise this stretch: cysteine 199–cysteine 288 and cysteine 207–cysteine 261. The interval 279–392 is esterase domain 2; that stretch reads LLSLPSKAIC…HCPTAANIGY (114 aa). Cysteine 319 and cysteine 324 form a disulfide bridge. 2 N-linked (GlcNAc...) asparagine; by host glycosylation sites follow: asparagine 328 and asparagine 332. Active-site charge relay system residues include aspartate 339 and histidine 342. N-linked (GlcNAc...) asparagine; by host glycosylation is found at asparagine 357 and asparagine 371. A disulfide bridge links cysteine 360 with cysteine 384. A helical transmembrane segment spans residues 405 to 425; the sequence is ILLGVLLGIAVLIIVFLNVLF. Topologically, residues 426–428 are intravirion; that stretch reads YDG.

It belongs to the influenza type C/coronaviruses hemagglutinin-esterase family. In terms of assembly, homodimer; disulfide-linked. Forms a complex with the M protein in the pre-Golgi. Associates then with S-M complex to form a ternary complex S-M-HE. Post-translationally, N-glycosylated in the RER. In terms of processing, N-glycosylated in the host RER.

The protein localises to the virion membrane. Its subcellular location is the host cell membrane. It carries out the reaction N-acetyl-9-O-acetylneuraminate + H2O = N-acetylneuraminate + acetate + H(+). It catalyses the reaction N-acetyl-4-O-acetylneuraminate + H2O = N-acetylneuraminate + acetate + H(+). Its function is as follows. Structural protein that makes short spikes at the surface of the virus. Contains receptor binding and receptor-destroying activities. Mediates de-O-acetylation of N-acetyl-4-O-acetylneuraminic acid, which is probably the receptor determinant recognized by the virus on the surface of erythrocytes and susceptible cells. This receptor-destroying activity is important for virus release as it probably helps preventing self-aggregation and ensures the efficient spread of the progeny virus from cell to cell. May serve as a secondary viral attachment protein for initiating infection, the spike protein being the major one. May become a target for both the humoral and the cellular branches of the immune system. This chain is Hemagglutinin-esterase, found in Mus musculus (Mouse).